The chain runs to 501 residues: Phase 2 flagellin (501 aa).

The protein belongs to the bacterial flagellin family.

The protein resides in the secreted. It is found in the bacterial flagellum. Functionally, flagellin is the subunit protein which polymerizes to form the filaments of bacterial flagella. The polypeptide is Phase 2 flagellin (fljB) (Salmonella abortus-equi).